Consider the following 314-residue polypeptide: MSIDLEKNHNRIYSMNINSMNRDPEFYLKKAKYFYSKSQENVDSDSTDSDNEKNNSTKNVSRNIPKNIPKSISKNIPKNVPRNIPKSIPKNVSKNIPKNVPKNVSKNIPKNIPKNVPNKSRNKYSNYSEDSNYSEDSDYSSDESNSINTVYSDEVDSESIYSDYSDDNDQNNVQNNVQNNVENEDDYDYEYVKMEPVDLAQLIEEHTDLRSKIKPKYTRFYDPVTRHYYSIDKLFEHEDVLLNKRPTTGVWYPEIQNQNNIMKDPKTGQLFRVKKIYNPKGKYHYEINSVKRQTKRKPGTTYYTVTYEDLDPLD.

The tract at residues 39-146 (QENVDSDSTD…SDYSSDESNS (108 aa)) is disordered. Residues 56-76 (STKNVSRNIPKNIPKSISKNI) are compositionally biased toward polar residues. Low complexity predominate over residues 88 to 131 (IPKNVSKNIPKNVPKNVSKNIPKNIPKNVPNKSRNKYSNYSEDS). Positions 132–141 (NYSEDSDYSS) are enriched in acidic residues.

This is an uncharacterized protein from Acanthamoeba polyphaga mimivirus (APMV).